The following is a 503-amino-acid chain: Ribonuclease Y (503 aa).

The helical transmembrane segment at glycine 2 to leucine 22 threads the bilayer. One can recognise a KH domain in the interval threonine 193–leucine 253. In terms of domain architecture, HD spans valine 319–serine 412.

It belongs to the RNase Y family.

The protein localises to the cell membrane. Its function is as follows. Endoribonuclease that initiates mRNA decay. In Mesoplasma florum (strain ATCC 33453 / NBRC 100688 / NCTC 11704 / L1) (Acholeplasma florum), this protein is Ribonuclease Y.